Here is a 548-residue protein sequence, read N- to C-terminus: Ankyrin repeat domain-containing protein SOWAHA (548 aa).

The signal sequence occupies residues 1-19; the sequence is MALAAAAAAAAAAAGVSQA. The disordered stretch occupies residues 114–212; it reads EDNCAPGAPH…PPTAQVPPQK (99 aa). A compositionally biased stretch (polar residues) spans 136-153; that stretch reads SAPSELQHTPETLPSEVT. Pro residues predominate over residues 198–212; sequence GPEPAPPTAQVPPQK. The residue at position 258 (serine 258) is a Phosphoserine. 2 ANK repeats span residues 344-373 and 383-413; these read SGFTALHWAAKNGDREMALQLVEVARRGGA and GGYTPLHLAALHGHEDAAVLLVVRLGAQVHV. The tract at residues 512–548 is disordered; that stretch reads PRKKTKIRGGLPSFTEISHRSTPGPLAGLVPSLPPPT.

The protein belongs to the SOWAH family.

The sequence is that of Ankyrin repeat domain-containing protein SOWAHA (Sowaha) from Mus musculus (Mouse).